Consider the following 365-residue polypeptide: Carbamoyl phosphate synthase small chain (365 aa).

2 CPSase regions span residues 1 to 166 and 1 to 169; these read MKRQ…PSPG and MKRQ…GRGH. Positions 45, 218, and 220 each coordinate L-glutamine. Positions 170 to 357 constitute a Glutamine amidotransferase type-1 domain; that stretch reads RVVLVDFGMK…LTMIENFKKE (188 aa). Cys245 serves as the catalytic Nucleophile. Residues Leu246, Gln249, Asn287, Gly289, and Tyr290 each contribute to the L-glutamine site. Residues His330 and Glu332 contribute to the active site.

Belongs to the CarA family. Composed of two chains; the small (or glutamine) chain promotes the hydrolysis of glutamine to ammonia, which is used by the large (or ammonia) chain to synthesize carbamoyl phosphate. Tetramer of heterodimers (alpha,beta)4.

It catalyses the reaction hydrogencarbonate + L-glutamine + 2 ATP + H2O = carbamoyl phosphate + L-glutamate + 2 ADP + phosphate + 2 H(+). It carries out the reaction L-glutamine + H2O = L-glutamate + NH4(+). Its pathway is amino-acid biosynthesis; L-arginine biosynthesis; carbamoyl phosphate from bicarbonate: step 1/1. It participates in pyrimidine metabolism; UMP biosynthesis via de novo pathway; (S)-dihydroorotate from bicarbonate: step 1/3. Its function is as follows. Small subunit of the glutamine-dependent carbamoyl phosphate synthetase (CPSase). CPSase catalyzes the formation of carbamoyl phosphate from the ammonia moiety of glutamine, carbonate, and phosphate donated by ATP, constituting the first step of 2 biosynthetic pathways, one leading to arginine and/or urea and the other to pyrimidine nucleotides. The small subunit (glutamine amidotransferase) binds and cleaves glutamine to supply the large subunit with the substrate ammonia. The sequence is that of Carbamoyl phosphate synthase small chain from Bacillus cereus (strain ZK / E33L).